Here is a 246-residue protein sequence, read N- to C-terminus: Thiamine import ATP-binding protein ThiQ (246 aa).

The region spanning 10 to 239 is the ABC transporter domain; the sequence is VKLDALAFAY…QGPPAFARYL (230 aa). ATP is bound at residue 41 to 48; it reads GPSGSGKS.

Belongs to the ABC transporter superfamily. Thiamine importer (TC 3.A.1.19.1) family. The complex is composed of two ATP-binding proteins (ThiQ), two transmembrane proteins (ThiP) and a solute-binding protein (ThiB).

It localises to the cell inner membrane. It carries out the reaction thiamine(out) + ATP + H2O = thiamine(in) + ADP + phosphate + H(+). Part of the ABC transporter complex ThiBPQ involved in thiamine import. Responsible for energy coupling to the transport system. This is Thiamine import ATP-binding protein ThiQ from Chelativorans sp. (strain BNC1).